We begin with the raw amino-acid sequence, 66 residues long: Toxin Tppa1 (66 aa).

In terms of domain architecture, LCN-type CS-alpha/beta spans 1–63 (KDGYLVGNDG…TWSRSTNRCG (63 aa)). 4 cysteine pairs are disulfide-bonded: Cys-11-Cys-62, Cys-15-Cys-37, Cys-23-Cys-43, and Cys-27-Cys-45.

It belongs to the long (4 C-C) scorpion toxin superfamily. Sodium channel inhibitor family. Beta subfamily. In terms of tissue distribution, expressed by the venom gland.

The protein resides in the secreted. In terms of biological role, beta toxins bind voltage-independently at site-4 of sodium channels (Nav) and shift the voltage of activation toward more negative potentials thereby affecting sodium channel activation and promoting spontaneous and repetitive firing. The chain is Toxin Tppa1 from Tityus pachyurus (Colombian scorpion).